Here is a 211-residue protein sequence, read N- to C-terminus: Large ribosomal subunit protein bL25 (211 aa).

This sequence belongs to the bacterial ribosomal protein bL25 family. CTC subfamily. In terms of assembly, part of the 50S ribosomal subunit; part of the 5S rRNA/L5/L18/L25 subcomplex. Contacts the 5S rRNA. Binds to the 5S rRNA independently of L5 and L18.

In terms of biological role, this is one of the proteins that binds to the 5S RNA in the ribosome where it forms part of the central protuberance. The sequence is that of Large ribosomal subunit protein bL25 from Methylobacterium nodulans (strain LMG 21967 / CNCM I-2342 / ORS 2060).